Here is a 432-residue protein sequence, read N- to C-terminus: Asparagine--tRNA ligase (432 aa).

It belongs to the class-II aminoacyl-tRNA synthetase family. In terms of assembly, homodimer.

Its subcellular location is the cytoplasm. It catalyses the reaction tRNA(Asn) + L-asparagine + ATP = L-asparaginyl-tRNA(Asn) + AMP + diphosphate + H(+). In Lactobacillus helveticus (strain DPC 4571), this protein is Asparagine--tRNA ligase.